The sequence spans 552 residues: MGKVNVAKLRYMSRDDFRVLTAVEMGMKNHEIVPGSLIASIASLKHGGCNKVLRELVKHKLIAWERTKTVQGYRLTNAGYDYLALKTLSSRQVVESVGNQMGVGKESDIYIVANEEGQQFALKLHRLGRTSFRNLKNKRDYHKHRHNVSWLYLSRLSAMKEFAYMKALYERKFPVPKPIDYNRHAVVMELINGYPLCQIHHVEDPASVYDEAMELIVKLANHGLIHGDFNEFNLILDESDHITMIDFPQMVSTSHPNAEWYFDRDVKCIKDFFMKRFSYESELFPTFKDIRREDTLDVEVSASGYTKEMQADDELLHPLGPDDKNIETKEGSEFSFSDGEVAEKAEVYGSENESERNCLEESEGCYCRSSGDPEQIKEDSLSEESADARSFEMTEFNQALEEIKGQVVENNSVTEFSEEKNRTENYNRQDGQRVQGGVPAGSDEYEDECPHLIALSSLNREFRPFRDEENVGAMNQYRTRTLSITSSGSAVSCSTIPPELVKQKVKRQLTKQQKSAVRRRLQKGEANIFTKQRRENMQNIKSSLEAASFWGE.

Residues 97-272 (VGNQMGVGKE…DRDVKCIKDF (176 aa)) form the Protein kinase domain. Lys123 serves as a coordination point for ATP. The Proton acceptor role is filled by Asp228. Ser332, Ser335, Ser337, Ser350, Ser362, Ser380, Ser382, Ser385, and Ser390 each carry phosphoserine. A Nuclear export signal motif is present at residues 399–408 (ALEEIKGQVV). Phosphoserine is present on residues Ser412, Ser417, and Ser442. The residue at position 445 (Tyr445) is a Phosphotyrosine. Ser548 bears the Phosphoserine mark.

Belongs to the protein kinase superfamily. RIO-type Ser/Thr kinase family. As to quaternary structure, associated with late 40S pre-ribosomal particles. Interacts with PLK1 (via its N-terminus). The cofactor is Mg(2+). Autophosphorylated (in vitro). Phosphorylation at Ser-335, Ser-380, Ser-548 by PLK1 affects the timing of the metaphase-anaphase transition.

It localises to the cytoplasm. It carries out the reaction L-seryl-[protein] + ATP = O-phospho-L-seryl-[protein] + ADP + H(+). The enzyme catalyses L-threonyl-[protein] + ATP = O-phospho-L-threonyl-[protein] + ADP + H(+). Functionally, serine/threonine-protein kinase involved in the final steps of cytoplasmic maturation of the 40S ribosomal subunit. Involved in export of the 40S pre-ribosome particles (pre-40S) from the nucleus to the cytoplasm. Its kinase activity is required for the release of NOB1, PNO1 and LTV1 from the late pre-40S and the processing of 18S-E pre-rRNA to the mature 18S rRNA. Regulates the timing of the metaphase-anaphase transition during mitotic progression, and its phosphorylation, most likely by PLK1, regulates this function. This is Serine/threonine-protein kinase RIO2 from Homo sapiens (Human).